A 319-amino-acid polypeptide reads, in one-letter code: Transaldolase (319 aa).

Lysine 126 functions as the Schiff-base intermediate with substrate in the catalytic mechanism.

This sequence belongs to the transaldolase family. Type 1 subfamily. As to quaternary structure, homodimer.

The protein localises to the cytoplasm. The catalysed reaction is D-sedoheptulose 7-phosphate + D-glyceraldehyde 3-phosphate = D-erythrose 4-phosphate + beta-D-fructose 6-phosphate. It functions in the pathway carbohydrate degradation; pentose phosphate pathway; D-glyceraldehyde 3-phosphate and beta-D-fructose 6-phosphate from D-ribose 5-phosphate and D-xylulose 5-phosphate (non-oxidative stage): step 2/3. Functionally, transaldolase is important for the balance of metabolites in the pentose-phosphate pathway. This is Transaldolase from Bordetella petrii (strain ATCC BAA-461 / DSM 12804 / CCUG 43448).